Consider the following 256-residue polypeptide: Flap endonuclease Xni (256 aa).

Asp-105 contacts Mg(2+). Residues Ser-164–Val-250 form the 5'-3' exonuclease domain. K(+) is bound by residues Met-172, Ala-173, Pro-181, Ile-183, and Ile-186. Residues Gly-185–Ser-190 are interaction with DNA.

The protein belongs to the Xni family. Requires Mg(2+) as cofactor. K(+) is required as a cofactor.

Has flap endonuclease activity. During DNA replication, flap endonucleases cleave the 5'-overhanging flap structure that is generated by displacement synthesis when DNA polymerase encounters the 5'-end of a downstream Okazaki fragment. This chain is Flap endonuclease Xni, found in Shewanella loihica (strain ATCC BAA-1088 / PV-4).